Here is a 189-residue protein sequence, read N- to C-terminus: Putative ankyrin repeat protein L38 (189 aa).

One copy of the ANK repeat lies at 108–137; it reads YGKTPLITAIKSGNCIMVKKLIDYGADFNK.

The chain is Putative ankyrin repeat protein L38 from Acanthamoeba polyphaga mimivirus (APMV).